The primary structure comprises 436 residues: 3-phosphoshikimate 1-carboxyvinyltransferase (436 aa).

Residues K23, S24, and R28 each coordinate 3-phosphoshikimate. Position 23 (K23) interacts with phosphoenolpyruvate. 2 residues coordinate phosphoenolpyruvate: G97 and R126. Residues S171, Q173, D323, and K350 each contribute to the 3-phosphoshikimate site. Q173 provides a ligand contact to phosphoenolpyruvate. The active-site Proton acceptor is the D323. Positions 354 and 396 each coordinate phosphoenolpyruvate.

It belongs to the EPSP synthase family. As to quaternary structure, monomer.

It localises to the cytoplasm. The enzyme catalyses 3-phosphoshikimate + phosphoenolpyruvate = 5-O-(1-carboxyvinyl)-3-phosphoshikimate + phosphate. Its pathway is metabolic intermediate biosynthesis; chorismate biosynthesis; chorismate from D-erythrose 4-phosphate and phosphoenolpyruvate: step 6/7. Its function is as follows. Catalyzes the transfer of the enolpyruvyl moiety of phosphoenolpyruvate (PEP) to the 5-hydroxyl of shikimate-3-phosphate (S3P) to produce enolpyruvyl shikimate-3-phosphate and inorganic phosphate. This chain is 3-phosphoshikimate 1-carboxyvinyltransferase, found in Prochlorococcus marinus (strain AS9601).